Here is a 452-residue protein sequence, read N- to C-terminus: Chaperone SurA (452 aa).

A signal peptide spans 1–28 (MKKTLRFAAVVSSLAASAALLVAAPAAA). PpiC domains lie at 186-288 (QQDL…RLVD) and 302-400 (IVQT…QVLN).

Its subcellular location is the periplasm. It catalyses the reaction [protein]-peptidylproline (omega=180) = [protein]-peptidylproline (omega=0). In terms of biological role, chaperone involved in the correct folding and assembly of outer membrane proteins. Recognizes specific patterns of aromatic residues and the orientation of their side chains, which are found more frequently in integral outer membrane proteins. May act in both early periplasmic and late outer membrane-associated steps of protein maturation. The chain is Chaperone SurA from Burkholderia orbicola (strain AU 1054).